The primary structure comprises 490 residues: Ent-kaurenoic acid oxidase 1 (490 aa).

Residues 6–26 (SWIPVWFPLMVLGCFGLNWLV) traverse the membrane as a helical segment. Position 439 (Cys-439) interacts with heme.

It belongs to the cytochrome P450 family. Requires heme as cofactor. As to expression, widely expressed. Highly expressed in influorescence stem, influorescence, and silique tissue. Weakly expressed in cauline and rosette leaves. Expressed at a higher level in stem and influorescence than AtKAO2/CYP88A4.

The protein resides in the endoplasmic reticulum membrane. It catalyses the reaction ent-kaur-16-en-19-oate + 3 reduced [NADPH--hemoprotein reductase] + 3 O2 = gibberellin A12 + 3 oxidized [NADPH--hemoprotein reductase] + 4 H2O + 4 H(+). The enzyme catalyses ent-kaur-16-en-19-oate + reduced [NADPH--hemoprotein reductase] + O2 = ent-7alpha-hydroxykaur-16-en-19-oate + oxidized [NADPH--hemoprotein reductase] + H2O + H(+). The catalysed reaction is ent-7alpha-hydroxykaur-16-en-19-oate + reduced [NADPH--hemoprotein reductase] + O2 = gibberellin A12 aldehyde + oxidized [NADPH--hemoprotein reductase] + 2 H2O + H(+). It carries out the reaction gibberellin A12 aldehyde + reduced [NADPH--hemoprotein reductase] + O2 = gibberellin A12 + oxidized [NADPH--hemoprotein reductase] + H2O + 2 H(+). It functions in the pathway plant hormone biosynthesis; gibberellin biosynthesis. In terms of biological role, catalyzes three successive oxidations of ent-kaurenoic acid giving gibberellin 12 (GA12), a key step in gibberellins (GAs) biosynthesis. GAs, which are involved many processes, including stem elongation, play a central role in plant development. This is Ent-kaurenoic acid oxidase 1 from Arabidopsis thaliana (Mouse-ear cress).